The chain runs to 104 residues: Large ribosomal subunit protein uL24 (104 aa).

The protein belongs to the universal ribosomal protein uL24 family. As to quaternary structure, part of the 50S ribosomal subunit.

Its function is as follows. One of two assembly initiator proteins, it binds directly to the 5'-end of the 23S rRNA, where it nucleates assembly of the 50S subunit. Functionally, one of the proteins that surrounds the polypeptide exit tunnel on the outside of the subunit. The chain is Large ribosomal subunit protein uL24 from Shewanella sp. (strain W3-18-1).